Here is a 705-residue protein sequence, read N- to C-terminus: Effector protein AvrPphDPsv (705 aa).

Positions M1–P15 are enriched in polar residues. Disordered regions lie at residues M1–S40 and R175–S205.

The protein resides in the secreted. Functionally, effector protein involved in non-host recognition. This Pseudomonas savastanoi (Pseudomonas syringae pv. savastanoi) protein is Effector protein AvrPphDPsv (avrPphDPsv).